The following is a 201-amino-acid chain: Recombination protein RecR (201 aa).

The segment at 60–75 (CQICGNIDTRDPCTIC) adopts a C4-type zinc-finger fold. Residues 83–178 (TLLVVVETVA…KITRLAHGVP (96 aa)) enclose the Toprim domain.

Belongs to the RecR family.

Functionally, may play a role in DNA repair. It seems to be involved in an RecBC-independent recombinational process of DNA repair. It may act with RecF and RecO. The polypeptide is Recombination protein RecR (Beijerinckia indica subsp. indica (strain ATCC 9039 / DSM 1715 / NCIMB 8712)).